A 351-amino-acid polypeptide reads, in one-letter code: Glycerol-3-phosphate dehydrogenase 1-like protein (351 aa).

12–17 (GSGNWG) contacts NAD(+). Lys-122 is a substrate binding site. Residue Ala-155 coordinates NAD(+). The active-site Proton acceptor is Lys-206. Arg-271, Lys-298, and Gln-300 together coordinate NAD(+). 271 to 272 (RN) contributes to the substrate binding site.

The protein belongs to the NAD-dependent glycerol-3-phosphate dehydrogenase family. Interacts with SCN5A. Most highly expressed in heart tissue, with lower levels in the skeletal muscle, kidney, lung and other organs.

The protein resides in the cytoplasm. The enzyme catalyses sn-glycerol 3-phosphate + NAD(+) = dihydroxyacetone phosphate + NADH + H(+). In terms of biological role, plays a role in regulating cardiac sodium current; decreased enzymatic activity with resulting increased levels of glycerol 3-phosphate activating the DPD1L-dependent SCN5A phosphorylation pathway, may ultimately lead to decreased sodium current; cardiac sodium current may also be reduced due to alterations of NAD(H) balance induced by DPD1L. This is Glycerol-3-phosphate dehydrogenase 1-like protein from Homo sapiens (Human).